The primary structure comprises 384 residues: Anhydro-N-acetylmuramic acid kinase (384 aa).

9 to 16 (GTSYDAID) contributes to the ATP binding site.

The protein belongs to the anhydro-N-acetylmuramic acid kinase family.

The catalysed reaction is 1,6-anhydro-N-acetyl-beta-muramate + ATP + H2O = N-acetyl-D-muramate 6-phosphate + ADP + H(+). Its pathway is amino-sugar metabolism; 1,6-anhydro-N-acetylmuramate degradation. It functions in the pathway cell wall biogenesis; peptidoglycan recycling. Its function is as follows. Catalyzes the specific phosphorylation of 1,6-anhydro-N-acetylmuramic acid (anhMurNAc) with the simultaneous cleavage of the 1,6-anhydro ring, generating MurNAc-6-P. Is required for the utilization of anhMurNAc either imported from the medium or derived from its own cell wall murein, and thus plays a role in cell wall recycling. The protein is Anhydro-N-acetylmuramic acid kinase of Streptomyces avermitilis (strain ATCC 31267 / DSM 46492 / JCM 5070 / NBRC 14893 / NCIMB 12804 / NRRL 8165 / MA-4680).